Reading from the N-terminus, the 352-residue chain is Ribosomal RNA large subunit methyltransferase M (352 aa).

Residues Ser184, 217–220 (APGG), Asp236, Asp256, and Asp272 contribute to the S-adenosyl-L-methionine site. Residue Lys301 is the Proton acceptor of the active site.

This sequence belongs to the class I-like SAM-binding methyltransferase superfamily. RNA methyltransferase RlmE family. RlmM subfamily. In terms of assembly, monomer.

Its subcellular location is the cytoplasm. It catalyses the reaction cytidine(2498) in 23S rRNA + S-adenosyl-L-methionine = 2'-O-methylcytidine(2498) in 23S rRNA + S-adenosyl-L-homocysteine + H(+). Its function is as follows. Catalyzes the 2'-O-methylation at nucleotide C2498 in 23S rRNA. This is Ribosomal RNA large subunit methyltransferase M from Pseudomonas paraeruginosa (strain DSM 24068 / PA7) (Pseudomonas aeruginosa (strain PA7)).